Here is a 453-residue protein sequence, read N- to C-terminus: MMSDFGEELTKLAVAEDNPETSVLSKTGMHFPWLHKHVEAVVTGGKKRKDFAQTTSACLSFIQEALLKHQWQQAAEYMHSYLQTLEDSDTDKRQAAPEIIWKLGSEILFYHPKSNVETFNSFADRMKNIGVLNYLKISLQHALYLLHHGMLDDANRNLSKAETWRYGEKSSSQEVLINLVQAYKGLLQYYTWTRKKMELSKLDEDDYAYAAKTRTMLSQSCKTSTNICALVKTPGVWDPFVKSYVEMLEFYGDQDGAREMLTNYAYDEKFPSNPNAHVYLYEFLKREKAPRAKLISVLKILHEIVPSHTLMLEFHTLLRKSDTEEHQKLGLSVLFEVLDFAGCNKNITAWKYLAKYLKQILVGSHHEWVEEEWKSRRNWWPAFHFSFFWAKSDWKADTDLACEKAFVAGVLLGKGCKYFRYILKQDHETLKKKIKRMKKSVKKYTIVNPGVHT.

Component of the transcription factor SL1/TIF-IB complex, composed of TBP and at least TAF1A, TAF1B, TAF1C and TAF1D. In the complex interacts directly with TBP, TAF1A and TAF1B. Interaction of the SL1/TIF-IB subunits with TBP excludes interaction of TBP with the transcription factor IID (TFIID) subunits. Interacts with UBFT. Interacts with CEBPA (isoform 1 and isoform 4). Part of Pol I pre-initiation complex (PIC), in which Pol I core assembles with RRN3 and promoter-bound UTBF and SL1/TIF-IB complex.

The protein localises to the nucleus. It localises to the nucleolus. Its function is as follows. Component of the transcription factor SL1/TIF-IB complex, which is involved in the assembly of the PIC (pre-initiation complex) during RNA polymerase I-dependent transcription. The rate of PIC formation probably is primarily dependent on the rate of association of SL1/TIF-IB with the rDNA promoter. SL1/TIF-IB is involved in stabilization of nucleolar transcription factor 1/UBTF on rDNA. Formation of SL1/TIF-IB excludes the association of TBP with TFIID subunits. In Mus musculus (Mouse), this protein is TATA box-binding protein-associated factor RNA polymerase I subunit A (Taf1a).